Here is a 489-residue protein sequence, read N- to C-terminus: Probable cytochrome P450 CYP44 (489 aa).

Positions 12–31 (VEKCPYSPTSSPNTPPRTFS) are disordered. Residues 16–29 (PYSPTSSPNTPPRT) are compositionally biased toward low complexity. Cysteine 438 provides a ligand contact to heme.

It belongs to the cytochrome P450 family. It depends on heme as a cofactor.

Cytochromes P450 are a group of heme-thiolate monooxygenases. They oxidize a variety of structurally unrelated compounds, including steroids, fatty acids, and xenobiotics. In Caenorhabditis elegans, this protein is Probable cytochrome P450 CYP44 (cyp-44A1).